A 309-amino-acid polypeptide reads, in one-letter code: Haloalkane dehalogenase (309 aa).

The region spanning Pro-37–Arg-148 is the AB hydrolase-1 domain. Asp-110 serves as the catalytic Nucleophile. Glu-134 serves as the catalytic Proton donor. The active-site Proton acceptor is the His-278.

The protein belongs to the haloalkane dehalogenase family. Type 2 subfamily. In terms of assembly, monomer.

It carries out the reaction 1-haloalkane + H2O = a halide anion + a primary alcohol + H(+). Its function is as follows. Catalyzes hydrolytic cleavage of carbon-halogen bonds in halogenated aliphatic compounds, leading to the formation of the corresponding primary alcohols, halide ions and protons. The chain is Haloalkane dehalogenase from Mesorhizobium japonicum (strain LMG 29417 / CECT 9101 / MAFF 303099) (Mesorhizobium loti (strain MAFF 303099)).